The chain runs to 141 residues: Putative antiporter subunit mnhB2 (141 aa).

4 helical membrane-spanning segments follow: residues 10–30, 35–55, 70–90, and 116–136; these read SVTK…FFAG, GGGF…FLAF, KLMI…MFFG, and LFEL…MLSI.

The protein belongs to the CPA3 antiporters (TC 2.A.63) subunit B family. As to quaternary structure, may form a heterooligomeric complex that consists of seven subunits: mnhA2, mnhB2, mnhC2, mnhD2, mnhE2, mnhF2 and mnhG2.

It localises to the cell membrane. In Staphylococcus epidermidis (strain ATCC 35984 / DSM 28319 / BCRC 17069 / CCUG 31568 / BM 3577 / RP62A), this protein is Putative antiporter subunit mnhB2 (mnhB2).